The following is a 305-amino-acid chain: DNA-directed RNA polymerase 35 kDa subunit (305 aa).

This sequence belongs to the poxviridae DNA-directed RNA polymerase 35 kDa subunit family. The DNA-dependent RNA polymerase used for intermediate and late genes expression consists of eight subunits 147 kDa, 133 kDa, 35 kDa, 30 kDa, 22 kDa, 19 kDa, 18 kDa and 7 kDa totalling more than 500 kDa in mass. The same holoenzyme, with the addition of the transcription-specificity factor RAP94, is used for early gene expression.

It is found in the virion. The enzyme catalyses RNA(n) + a ribonucleoside 5'-triphosphate = RNA(n+1) + diphosphate. Its function is as follows. Part of the DNA-dependent RNA polymerase which catalyzes the transcription of viral DNA into RNA using the four ribonucleoside triphosphates as substrates. Responsible for the transcription of early, intermediate and late genes. DNA-dependent RNA polymerase associates with the early transcription factor (ETF), itself composed of D6 and A7, thereby allowing the early genes transcription. Late transcription, and probably also intermediate transcription, require newly synthesized RNA polymerase. The protein is DNA-directed RNA polymerase 35 kDa subunit (OPG156) of Homo sapiens (Human).